We begin with the raw amino-acid sequence, 200 residues long: MKVYFLKENLNSYQIFPIPQNLNDFVEMEVENESELETKQLINFKSQYILVDRQPTELHIWNGNSWVIDEEKQTEVKRELIKRLVDSIDDTAASISAKWTRFSEEYKERESAALAFKEANFTGEVSIYISSLATVAGLDNKSATLLILKQAEGLRTLQEQLAAQRMRKYELKHEELSEEELQQIHNDIIRKMKALAEVQQ.

This is an uncharacterized protein from Haemophilus phage HP1 (strain HP1c1) (Bacteriophage HP1).